We begin with the raw amino-acid sequence, 159 residues long: Ribosomal RNA large subunit methyltransferase H (159 aa).

Residues Leu76, Gly108, and 127 to 132 each bind S-adenosyl-L-methionine; that span reads FSKMTF.

Belongs to the RNA methyltransferase RlmH family. In terms of assembly, homodimer.

The protein resides in the cytoplasm. It carries out the reaction pseudouridine(1915) in 23S rRNA + S-adenosyl-L-methionine = N(3)-methylpseudouridine(1915) in 23S rRNA + S-adenosyl-L-homocysteine + H(+). Specifically methylates the pseudouridine at position 1915 (m3Psi1915) in 23S rRNA. This chain is Ribosomal RNA large subunit methyltransferase H, found in Clostridium novyi (strain NT).